The sequence spans 296 residues: 3-methyl-2-oxobutanoate hydroxymethyltransferase (296 aa).

A compositionally biased stretch (low complexity) spans 1 to 14; it reads MTAPTPTPANAATP. The interval 1 to 29 is disordered; it reads MTAPTPTPANAATPYGTLPPASPLPQRRP. Residues aspartate 71 and aspartate 114 each contribute to the Mg(2+) site. Residues 71–72, aspartate 114, and lysine 143 each bind 3-methyl-2-oxobutanoate; that span reads DS. Position 145 (glutamate 145) interacts with Mg(2+). Glutamate 212 acts as the Proton acceptor in catalysis.

Belongs to the PanB family. As to quaternary structure, homodecamer; pentamer of dimers. Requires Mg(2+) as cofactor.

It is found in the cytoplasm. The enzyme catalyses 3-methyl-2-oxobutanoate + (6R)-5,10-methylene-5,6,7,8-tetrahydrofolate + H2O = 2-dehydropantoate + (6S)-5,6,7,8-tetrahydrofolate. It functions in the pathway cofactor biosynthesis; (R)-pantothenate biosynthesis; (R)-pantoate from 3-methyl-2-oxobutanoate: step 1/2. Functionally, catalyzes the reversible reaction in which hydroxymethyl group from 5,10-methylenetetrahydrofolate is transferred onto alpha-ketoisovalerate to form ketopantoate. This chain is 3-methyl-2-oxobutanoate hydroxymethyltransferase, found in Paracidovorax citrulli (strain AAC00-1) (Acidovorax citrulli).